Here is a 372-residue protein sequence, read N- to C-terminus: Chaperone protein DnaJ (372 aa).

Residues 5-70 (DFYEVLGVTK…QKRAAYDRYG (66 aa)) enclose the J domain. Residues 129 to 207 (GKLASLTLPT…CGGAGRVTRE (79 aa)) form a CR-type zinc finger. Residues Cys-142, Cys-145, Cys-159, Cys-162, Cys-181, Cys-184, Cys-195, and Cys-198 each contribute to the Zn(2+) site. 4 CXXCXGXG motif repeats span residues 142–149 (CEACDGTG), 159–166 (CPTCGGQG), 181–188 (CPQCHGRG), and 195–202 (CQACGGAG).

Belongs to the DnaJ family. Homodimer. The cofactor is Zn(2+).

The protein localises to the cytoplasm. Participates actively in the response to hyperosmotic and heat shock by preventing the aggregation of stress-denatured proteins and by disaggregating proteins, also in an autonomous, DnaK-independent fashion. Unfolded proteins bind initially to DnaJ; upon interaction with the DnaJ-bound protein, DnaK hydrolyzes its bound ATP, resulting in the formation of a stable complex. GrpE releases ADP from DnaK; ATP binding to DnaK triggers the release of the substrate protein, thus completing the reaction cycle. Several rounds of ATP-dependent interactions between DnaJ, DnaK and GrpE are required for fully efficient folding. Also involved, together with DnaK and GrpE, in the DNA replication of plasmids through activation of initiation proteins. The polypeptide is Chaperone protein DnaJ (Beijerinckia indica subsp. indica (strain ATCC 9039 / DSM 1715 / NCIMB 8712)).